The following is a 380-amino-acid chain: Erythronate-4-phosphate dehydrogenase (380 aa).

Ser45 and Thr66 together coordinate substrate. NAD(+)-binding residues include Asp146 and Thr174. Arg207 is a catalytic residue. Residue Asp231 coordinates NAD(+). Glu236 is a catalytic residue. His253 functions as the Proton donor in the catalytic mechanism. An NAD(+)-binding site is contributed by Gly256. Tyr257 lines the substrate pocket.

This sequence belongs to the D-isomer specific 2-hydroxyacid dehydrogenase family. PdxB subfamily. Homodimer.

It is found in the cytoplasm. The enzyme catalyses 4-phospho-D-erythronate + NAD(+) = (R)-3-hydroxy-2-oxo-4-phosphooxybutanoate + NADH + H(+). The protein operates within cofactor biosynthesis; pyridoxine 5'-phosphate biosynthesis; pyridoxine 5'-phosphate from D-erythrose 4-phosphate: step 2/5. Its function is as follows. Catalyzes the oxidation of erythronate-4-phosphate to 3-hydroxy-2-oxo-4-phosphonooxybutanoate. The protein is Erythronate-4-phosphate dehydrogenase of Pseudomonas fluorescens (strain Pf0-1).